The sequence spans 147 residues: Large ribosomal subunit protein bL9 (147 aa).

This sequence belongs to the bacterial ribosomal protein bL9 family.

Its function is as follows. Binds to the 23S rRNA. The sequence is that of Large ribosomal subunit protein bL9 from Phocaeicola vulgatus (strain ATCC 8482 / DSM 1447 / JCM 5826 / CCUG 4940 / NBRC 14291 / NCTC 11154) (Bacteroides vulgatus).